The following is a 300-amino-acid chain: Bifunctional protein FolD 2 (300 aa).

NADP(+)-binding positions include 165–167 (GRS), Ser-190, and Ile-231.

This sequence belongs to the tetrahydrofolate dehydrogenase/cyclohydrolase family. Homodimer.

The enzyme catalyses (6R)-5,10-methylene-5,6,7,8-tetrahydrofolate + NADP(+) = (6R)-5,10-methenyltetrahydrofolate + NADPH. The catalysed reaction is (6R)-5,10-methenyltetrahydrofolate + H2O = (6R)-10-formyltetrahydrofolate + H(+). Its pathway is one-carbon metabolism; tetrahydrofolate interconversion. Its function is as follows. Catalyzes the oxidation of 5,10-methylenetetrahydrofolate to 5,10-methenyltetrahydrofolate and then the hydrolysis of 5,10-methenyltetrahydrofolate to 10-formyltetrahydrofolate. In Pseudomonas syringae pv. tomato (strain ATCC BAA-871 / DC3000), this protein is Bifunctional protein FolD 2.